A 280-amino-acid chain; its full sequence is Eukaryotic translation initiation factor 3 subunit F-1 (280 aa).

One can recognise an MPN domain in the interval 8-138 (VRVHPVVLFQ…LRAYVCIQLG (131 aa)).

It belongs to the eIF-3 subunit F family. In terms of assembly, component of the eukaryotic translation initiation factor 3 (eIF-3) complex. The eIF-3 complex interacts with pix.

It localises to the cytoplasm. Component of the eukaryotic translation initiation factor 3 (eIF-3) complex, which is involved in protein synthesis of a specialized repertoire of mRNAs and, together with other initiation factors, stimulates binding of mRNA and methionyl-tRNAi to the 40S ribosome. The eIF-3 complex specifically targets and initiates translation of a subset of mRNAs involved in cell proliferation. This Drosophila yakuba (Fruit fly) protein is Eukaryotic translation initiation factor 3 subunit F-1.